Here is a 493-residue protein sequence, read N- to C-terminus: D-glyceraldehyde dehydrogenase (NADP(+)) (493 aa).

The stretch at 70–92 (RAKELIEKNRAELENIIMEENGK) forms a coiled coil. NADP(+) contacts are provided by residues 146 to 149 (TPWN), arginine 157, 172 to 176 (KPSSD), 204 to 210 (RGSEIGD), 225 to 248 (GSTA…ILEL), cysteine 281, and 381 to 383 (EIF). Residues asparagine 149 and arginine 157 each coordinate substrate. Residue glutamate 247 is the Proton acceptor of the active site. Cysteine 281 serves as a coordination point for substrate. Cysteine 281 (proton donor) is an active-site residue.

The protein belongs to the aldehyde dehydrogenase family. Glyceraldehyde dehydrogenase subfamily. In terms of assembly, homotetramer. Dimer of dimers.

It catalyses the reaction D-glyceraldehyde + NADP(+) + H2O = (R)-glycerate + NADPH + 2 H(+). It participates in carbohydrate degradation; glycolysis. Inhibited by calcium, cadmium, copper and mercury ions. Stable for 2 hours at 60 degrees Celsius but activity is decreased to less than 50 percent within 20 minutes at 80 degrees Celsius. Two folds activity enhancement in the presence of 1 mM glutathione, DTT, or 2-mercaptoethanol. Complete activity inhibition by thiol-modifying reagents such as p-chloromercuribenzoic acid or p-hydroxy-mercuribenzoic acid. NADP-dependent dehydrogenase of the nED (non-phosphorylated Entner-Doudoroff) pathway with highest activity towards glyceraldehydes (e.g. D,L-glyceraldehyde and D-glyceraldehyde), to a lesser extent towards D,L-glyceraldehyde-3-phosphate and glycolaldehyde, but no activity towards aliphatic or aromatic aldehydes. This Thermoplasma acidophilum (strain ATCC 25905 / DSM 1728 / JCM 9062 / NBRC 15155 / AMRC-C165) protein is D-glyceraldehyde dehydrogenase (NADP(+)).